Here is a 517-residue protein sequence, read N- to C-terminus: Ribose import ATP-binding protein RbsA 1 (517 aa).

2 ABC transporter domains span residues 11–251 and 263–507; these read LEMR…VGRD and YDPG…ALAT. 43–50 serves as a coordination point for ATP; the sequence is GENGAGKS.

The protein belongs to the ABC transporter superfamily. Ribose importer (TC 3.A.1.2.1) family. In terms of assembly, the complex is composed of an ATP-binding protein (RbsA), two transmembrane proteins (RbsC) and a solute-binding protein (RbsB).

The protein resides in the cell inner membrane. The enzyme catalyses D-ribose(out) + ATP + H2O = D-ribose(in) + ADP + phosphate + H(+). Part of the ABC transporter complex RbsABC involved in ribose import. Responsible for energy coupling to the transport system. The sequence is that of Ribose import ATP-binding protein RbsA 1 from Burkholderia cenocepacia (strain HI2424).